The following is a 259-amino-acid chain: GTP cyclohydrolase FolE2 (259 aa).

Belongs to the GTP cyclohydrolase IV family.

The catalysed reaction is GTP + H2O = 7,8-dihydroneopterin 3'-triphosphate + formate + H(+). The protein operates within cofactor biosynthesis; 7,8-dihydroneopterin triphosphate biosynthesis; 7,8-dihydroneopterin triphosphate from GTP: step 1/1. Its function is as follows. Converts GTP to 7,8-dihydroneopterin triphosphate. The polypeptide is GTP cyclohydrolase FolE2 (Thermosipho melanesiensis (strain DSM 12029 / CIP 104789 / BI429)).